Here is a 243-residue protein sequence, read N- to C-terminus: Orotidine 5'-phosphate decarboxylase (243 aa).

Substrate contacts are provided by residues Asp19, Lys41, 69–78, Thr124, Arg185, Gln194, Gly214, and Arg215; that span reads DLKFFDIPAT. Lys71 functions as the Proton donor in the catalytic mechanism.

Belongs to the OMP decarboxylase family. Type 1 subfamily. Homodimer.

The enzyme catalyses orotidine 5'-phosphate + H(+) = UMP + CO2. It participates in pyrimidine metabolism; UMP biosynthesis via de novo pathway; UMP from orotate: step 2/2. In terms of biological role, catalyzes the decarboxylation of orotidine 5'-monophosphate (OMP) to uridine 5'-monophosphate (UMP). The sequence is that of Orotidine 5'-phosphate decarboxylase from Xanthomonas campestris pv. campestris (strain B100).